The chain runs to 288 residues: Thymidylate synthase (288 aa).

A dUMP-binding site is contributed by R21. Residue N51 participates in (6R)-5,10-methylene-5,6,7,8-tetrahydrofolate binding. A dUMP-binding site is contributed by 150 to 151; that stretch reads RR. Residue C170 is the Nucleophile of the active site. Residues 190-193, N201, and 231-233 each bind dUMP; these read RSGD and HIY. D193 contacts (6R)-5,10-methylene-5,6,7,8-tetrahydrofolate. A287 contributes to the (6R)-5,10-methylene-5,6,7,8-tetrahydrofolate binding site.

The protein belongs to the thymidylate synthase family. Bacterial-type ThyA subfamily. As to quaternary structure, homodimer.

The protein localises to the cytoplasm. It catalyses the reaction dUMP + (6R)-5,10-methylene-5,6,7,8-tetrahydrofolate = 7,8-dihydrofolate + dTMP. The protein operates within pyrimidine metabolism; dTTP biosynthesis. In terms of biological role, catalyzes the reductive methylation of 2'-deoxyuridine-5'-monophosphate (dUMP) to 2'-deoxythymidine-5'-monophosphate (dTMP) while utilizing 5,10-methylenetetrahydrofolate (mTHF) as the methyl donor and reductant in the reaction, yielding dihydrofolate (DHF) as a by-product. This enzymatic reaction provides an intracellular de novo source of dTMP, an essential precursor for DNA biosynthesis. The polypeptide is Thymidylate synthase (Phytoplasma mali (strain AT)).